The chain runs to 877 residues: TSET complex member tstB (877 aa).

Disordered stretches follow at residues 398 to 437 (HLHH…SGSS) and 522 to 557 (TGLP…SNSI). Low complexity-rich tracts occupy residues 412–437 (GSVP…SGSS) and 529–556 (SNNN…SSNS).

Component of the TSET complex, a heterohexamer composed of tstA, tstB, tstC, tstD, tstE and tstF, which may act in plasma membrane turnover. tstA, tstB, tstC and tstD are likely to be the core complex members with tstE and tstF acting as associated scaffold proteins.

The sequence is that of TSET complex member tstB from Dictyostelium discoideum (Social amoeba).